The sequence spans 235 residues: MIQTFNDAQQKVWFDDALLHEDPSQCCNPEFWQQNGKVLGSATGRGTTWFVQLQQTQGALRHYRRGGLFGKLVADSYWFTGWEKTRSYQEFMLLNHLRDAGVNVPRPIAARVQKHGLLYKADLLSEKVPNARDLVSILQESPISDELYRKIGREIRKMHDAQVNHTDLNIHNILIDDQEKVWIIDFDKCYVQIGDSWKQGNLKRLKRSFEKEVCKRGINWSLEAFAIISSYKHEE.

Residue aspartate 167 is part of the active site.

It belongs to the protein kinase superfamily. KdkA/RfaP family.

The protein localises to the cell inner membrane. The catalysed reaction is an alpha-Kdo-(2-&gt;6)-lipid IVA + ATP = a 4-O-phospho-alpha-Kdo-(2-&gt;6)-lipid IVA + ADP + H(+). Its pathway is bacterial outer membrane biogenesis; LPS core biosynthesis. In terms of biological role, catalyzes the ATP-dependent phosphorylation of the 3-deoxy-D-manno-octulosonic acid (Kdo) residue in Kdo-lipid IV(A) at the 4-OH position. The polypeptide is 3-deoxy-D-manno-octulosonic acid kinase (kdkA) (Vibrio cholerae serotype O1 (strain ATCC 39315 / El Tor Inaba N16961)).